Here is a 703-residue protein sequence, read N- to C-terminus: Phenylalanine aminomutase (L-beta-phenylalanine forming) (703 aa).

The active-site Proton donor/acceptor is the tyrosine 79. The segment at residues 177–179 is a cross-link (5-imidazolinone (Ala-Gly)); that stretch reads ASG. Serine 178 is modified (2,3-didehydroalanine (Ser)).

It belongs to the PAL/histidase family. Contains an active site 4-methylidene-imidazol-5-one (MIO), which is formed autocatalytically by cyclization and dehydration of residues Ala-Ser-Gly.

It catalyses the reaction L-phenylalanine = L-beta-phenylalanine. It participates in mycotoxin biosynthesis. Its function is as follows. Phenylalanine aminomutase; part of the gene cluster that mediates the biosynthesis of the mycotoxin cyclochlorotine, a hepatotoxic and carcinogenic cyclic chlorinated pentapeptide. Within the pathway, cctP1 provides the uncommon building block beta-Phe from Phe. The NRPS cctN initially catalyzes the condensation of L-serine (Ser), Pro, L-2-aminobutyrate (2Abu), Ser, and beta-Phe in this order to produce isocyclotine. After the dichlorination of Pro2 catalyzed by cctP2 to produce isocyclochlorotine, the cctO-mediated transacylation of isocyclochlorotine can furnish cyclochlorotine. The subsequent hydroxylation of cyclochlorotine by cctR yields hydroxycyclochlorotine as the final product. CctP1 probably acts as a phenylalanine aminomutase and provides the uncommon building block beta-Phe. Furthermore, 2Abu can be synthesized from threonine by one of the threonine dehydratases and transaminases localized outside of the cluster. The functions of the remaining proteins encoded by the cluster, cctM and cctT, have not been identified yet. This Talaromyces islandicus (Penicillium islandicum) protein is Phenylalanine aminomutase (L-beta-phenylalanine forming).